A 190-amino-acid chain; its full sequence is Carbonic anhydrase 2 (190 aa).

This sequence belongs to the beta-class carbonic anhydrase family. In terms of assembly, homohexamer.

The protein resides in the cytoplasm. It carries out the reaction hydrogencarbonate + H(+) = CO2 + H2O. Reversible hydration of carbon dioxide. The polypeptide is Carbonic anhydrase 2 (Flaveria linearis (Narrowleaf yellowtops)).